Consider the following 235-residue polypeptide: Clathrin light chain A (235 aa).

The tract at residues 1–32 (MAELDPFGAPAGAPGGPALGNGVAGAGEEDPA) is disordered. The span at 13 to 25 (APGGPALGNGVAG) shows a compositional bias: gly residues. Residues 99–161 (VDRLQSEPES…QLQKTKANNR (63 aa)) form an involved in binding clathrin heavy chain region. Residues Ser104 and Ser193 each carry the phosphoserine modification. Lys210 is modified (N6-acetyllysine). Ser223 carries the phosphoserine modification. Lys229 is modified (N6-acetyllysine).

Belongs to the clathrin light chain family. As to quaternary structure, clathrin coats are formed from molecules containing 3 heavy chains and 3 light chains. Interacts with CALY; the interaction stimulates clathrin self-assembly and clathrin-mediated endocytosis. Interacts with CKAP5 and TACC3 forming the TACC3/ch-TOG/clathrin complex located at spindle inter-microtubules bridges; the complex implicates clathrin triskelions.

It localises to the cytoplasmic vesicle membrane. Its subcellular location is the membrane. The protein resides in the coated pit. It is found in the cytoplasm. The protein localises to the cytoskeleton. It localises to the spindle. Clathrin is the major protein of the polyhedral coat of coated pits and vesicles. Acts as a component of the TACC3/ch-TOG/clathrin complex proposed to contribute to stabilization of kinetochore fibers of the mitotic spindle by acting as inter-microtubule bridge. The polypeptide is Clathrin light chain A (Clta) (Mus musculus (Mouse)).